A 245-amino-acid chain; its full sequence is 1-(5-phosphoribosyl)-5-[(5-phosphoribosylamino)methylideneamino] imidazole-4-carboxamide isomerase (245 aa).

The Proton acceptor role is filled by aspartate 8. Catalysis depends on aspartate 130, which acts as the Proton donor.

This sequence belongs to the HisA/HisF family.

It localises to the cytoplasm. It catalyses the reaction 1-(5-phospho-beta-D-ribosyl)-5-[(5-phospho-beta-D-ribosylamino)methylideneamino]imidazole-4-carboxamide = 5-[(5-phospho-1-deoxy-D-ribulos-1-ylimino)methylamino]-1-(5-phospho-beta-D-ribosyl)imidazole-4-carboxamide. It functions in the pathway amino-acid biosynthesis; L-histidine biosynthesis; L-histidine from 5-phospho-alpha-D-ribose 1-diphosphate: step 4/9. The sequence is that of 1-(5-phosphoribosyl)-5-[(5-phosphoribosylamino)methylideneamino] imidazole-4-carboxamide isomerase from Pseudomonas putida (strain W619).